Consider the following 994-residue polypeptide: Regulator of telomere elongation helicase 1 homolog (994 aa).

Residues 7–316 (AGIPVHFPFE…DDLMLLKEML (310 aa)) enclose the Helicase ATP-binding domain. 42-49 (SPTGTGKT) is a binding site for ATP. Residues cysteine 146, cysteine 164, cysteine 173, and cysteine 209 each contribute to the [4Fe-4S] cluster site. A DEAH box motif is present at residues 252–255 (DEAH). Residues 861–887 (SSGLVKIHKRERSSPPGSSQSSSQTAK) are disordered. The segment covering 874-884 (SPPGSSQSSSQ) has biased composition (low complexity).

This sequence belongs to the helicase family. RAD3/XPD subfamily.

It is found in the nucleus. It catalyses the reaction ATP + H2O = ADP + phosphate + H(+). Its function is as follows. A probable ATP-dependent DNA helicase implicated in DNA repair and the maintenance of genomic stability. Acts as an anti-recombinase to counteract toxic recombination and limit crossover during meiosis. Regulates meiotic recombination and crossover homeostasis by physically dissociating strand invasion events and thereby promotes noncrossover repair by meiotic synthesis dependent strand annealing (SDSA) as well as disassembly of D loop recombination intermediates. The sequence is that of Regulator of telomere elongation helicase 1 homolog from Drosophila ananassae (Fruit fly).